The following is a 782-amino-acid chain: DnaJ homolog subfamily C member 16 (782 aa).

Residues 1 to 25 form the signal peptide; the sequence is MEVRKLSISWQFLIVLVLILQILSA. Topologically, residues 26–535 are cytoplasmic; it reads LDFDPYKVLG…DSIFHNNWRE (510 aa). In terms of domain architecture, J spans 29–93; sequence DPYKVLGVSR…EKRSNYDQYG (65 aa). Residues 119-247 form the Thioredoxin domain; sequence FYFDESFFHF…LRQFVESLLP (129 aa). Residues 536-556 form a helical; Anchor for type IV membrane protein membrane-spanning segment; sequence MMPLLSLIFSALFILFGTVIV. Residues 557-782 are Extracellular-facing; sequence QAFSDSSDER…FYIPSWPELD (226 aa). Residues 562-593 are disordered; it reads SSDERESSPPDKEEAQEKTGKTEPSFTKENSS. The span at 563–582 shows a compositional bias: basic and acidic residues; it reads SDERESSPPDKEEAQEKTGK. Positions 583-593 are enriched in polar residues; sequence TEPSFTKENSS. A glycan (N-linked (GlcNAc...) asparagine) is linked at Asn-631.

It is found in the endoplasmic reticulum membrane. Functionally, plays an important role in regulating the size of autophagosomes during the formation process. The sequence is that of DnaJ homolog subfamily C member 16 (DNAJC16) from Pongo abelii (Sumatran orangutan).